We begin with the raw amino-acid sequence, 83 residues long: Cytochrome b559 subunit alpha (83 aa).

The chain crosses the membrane as a helical span at residues 21-35 (IIHSITIPSLFIAGW). His-23 provides a ligand contact to heme.

In terms of assembly, heterodimer of an alpha subunit and a beta subunit. PSII is composed of 1 copy each of membrane proteins PsbA, PsbB, PsbC, PsbD, PsbE, PsbF, PsbH, PsbI, PsbJ, PsbK, PsbL, PsbM, PsbT, PsbX, PsbY, PsbZ, Psb30/Ycf12, at least 3 peripheral proteins of the oxygen-evolving complex and a large number of cofactors. It forms dimeric complexes. It depends on heme b as a cofactor.

The protein localises to the plastid. It localises to the chloroplast thylakoid membrane. Functionally, this b-type cytochrome is tightly associated with the reaction center of photosystem II (PSII). PSII is a light-driven water:plastoquinone oxidoreductase that uses light energy to abstract electrons from H(2)O, generating O(2) and a proton gradient subsequently used for ATP formation. It consists of a core antenna complex that captures photons, and an electron transfer chain that converts photonic excitation into a charge separation. This chain is Cytochrome b559 subunit alpha, found in Pisum sativum (Garden pea).